A 226-amino-acid chain; its full sequence is MIESISKIIKYNFKNPQLLNEALTHPSLVSKDTLKFNYERLEFLGDAVLNIVISEMLFNIFPKDTEGNLAKKKTALVCGNKLVEVAQSINLGQFIMMSDGERACGGINNFRNLENALEALIGAIYLDGGFTAAQDFIYLFWEHSATHMNVPPQDAKTILQELVQGKRLPAPAYHTIDKSGPDHNPTFTVEVRIPSYQAIQATGHNKKLAEQKAASLMLNQIHNKTK.

An RNase III domain is found at 2–129; it reads IESISKIIKY…LIGAIYLDGG (128 aa). Glu-42 provides a ligand contact to Mg(2+). The active site involves Asp-46. 2 residues coordinate Mg(2+): Asn-115 and Glu-118. Glu-118 is an active-site residue. In terms of domain architecture, DRBM spans 154-223; the sequence is DAKTILQELV…ASLMLNQIHN (70 aa).

Belongs to the ribonuclease III family. Homodimer. Requires Mg(2+) as cofactor.

It localises to the cytoplasm. The catalysed reaction is Endonucleolytic cleavage to 5'-phosphomonoester.. Its function is as follows. Digests double-stranded RNA. Involved in the processing of primary rRNA transcript to yield the immediate precursors to the large and small rRNAs (23S and 16S). Processes some mRNAs, and tRNAs when they are encoded in the rRNA operon. Processes pre-crRNA and tracrRNA of type II CRISPR loci if present in the organism. This Ehrlichia chaffeensis (strain ATCC CRL-10679 / Arkansas) protein is Ribonuclease 3.